A 104-amino-acid polypeptide reads, in one-letter code: ESAT-6-like protein (104 aa).

Residues 12–43 adopt a coiled-coil conformation; the sequence is MAQAAQDIEQSANAIRGMQNQLASAKDQLRSH.

The protein belongs to the WXG100 family. CFP-10 subfamily. In isolation forms a homodimer. Forms a tight 1:1 complex with EsxA. Forms a complex with EsxA and EccC, probably wholly mediated by EsxB; binds in a pocket in the third FtsK (ATPase) domain of EccC (residues 1163-1208).

It localises to the secreted. Functionally, may help regulate assembly and function of the type VII secretion system (T7SS). Binds to EccC and induces its multimerization. May serve as a chaperone for EsxA. The chain is ESAT-6-like protein from Thermomonospora curvata (strain ATCC 19995 / DSM 43183 / JCM 3096 / KCTC 9072 / NBRC 15933 / NCIMB 10081 / Henssen B9).